A 366-amino-acid polypeptide reads, in one-letter code: Aminomethyltransferase (366 aa).

The protein belongs to the GcvT family. In terms of assembly, the glycine cleavage system is composed of four proteins: P, T, L and H.

It carries out the reaction N(6)-[(R)-S(8)-aminomethyldihydrolipoyl]-L-lysyl-[protein] + (6S)-5,6,7,8-tetrahydrofolate = N(6)-[(R)-dihydrolipoyl]-L-lysyl-[protein] + (6R)-5,10-methylene-5,6,7,8-tetrahydrofolate + NH4(+). In terms of biological role, the glycine cleavage system catalyzes the degradation of glycine. This is Aminomethyltransferase from Moorella thermoacetica (strain ATCC 39073 / JCM 9320).